The following is a 451-amino-acid chain: Tubulin alpha-2 chain (451 aa).

A GTP-binding site is contributed by glutamine 11. An N6-acetyllysine modification is found at lysine 40. Glutamate 71, glycine 144, threonine 145, threonine 179, asparagine 206, and asparagine 228 together coordinate GTP. Glutamate 71 is a binding site for Mg(2+). Glutamate 254 is a catalytic residue.

Belongs to the tubulin family. In terms of assembly, dimer of alpha and beta chains. A typical microtubule is a hollow water-filled tube with an outer diameter of 25 nm and an inner diameter of 15 nM. Alpha-beta heterodimers associate head-to-tail to form protofilaments running lengthwise along the microtubule wall with the beta-tubulin subunit facing the microtubule plus end conferring a structural polarity. Microtubules usually have 13 protofilaments but different protofilament numbers can be found in some organisms and specialized cells. The cofactor is Mg(2+). In terms of processing, undergoes a tyrosination/detyrosination cycle, the cyclic removal and re-addition of a C-terminal tyrosine residue by the enzymes tubulin tyrosine carboxypeptidase (TTCP) and tubulin tyrosine ligase (TTL), respectively. Acetylation of alpha chains at Lys-40 stabilizes microtubules and affects affinity and processivity of microtubule motors. This modification has a role in multiple cellular functions, ranging from cell motility, cell cycle progression or cell differentiation to intracellular trafficking and signaling.

The protein resides in the cytoplasm. It localises to the cytoskeleton. The enzyme catalyses GTP + H2O = GDP + phosphate + H(+). In terms of biological role, tubulin is the major constituent of microtubules, a cylinder consisting of laterally associated linear protofilaments composed of alpha- and beta-tubulin heterodimers. Microtubules grow by the addition of GTP-tubulin dimers to the microtubule end, where a stabilizing cap forms. Below the cap, tubulin dimers are in GDP-bound state, owing to GTPase activity of alpha-tubulin. The sequence is that of Tubulin alpha-2 chain (TUBA2) from Hordeum vulgare (Barley).